We begin with the raw amino-acid sequence, 612 residues long: UPF0329 protein ECU05_1680/ECU11_0050 (612 aa).

Positions 304-330 (RQRREMEKKEEEKKKEEEKKKEEEKRK) are enriched in basic and acidic residues. Positions 304–424 (RQRREMEKKE…RKRYKIHRRV (121 aa)) are disordered. A compositionally biased stretch (basic residues) spans 331–349 (EEKKKKKEEKKEEKKKKKE). A compositionally biased stretch (basic and acidic residues) spans 350–388 (EKKEEKKEEKKEEKKEEKKEEKKEEKKEEKSGKSLREGE).

The protein belongs to the UPF0329 family.

The sequence is that of UPF0329 protein ECU05_1680/ECU11_0050 from Encephalitozoon cuniculi (strain GB-M1) (Microsporidian parasite).